Here is a 305-residue protein sequence, read N- to C-terminus: Nucleotide-binding protein Mjls_2437 (305 aa).

28–35 provides a ligand contact to ATP; it reads GLSGAGRG. Residue 79–82 coordinates GTP; sequence DVRS.

It belongs to the RapZ-like family.

Its function is as follows. Displays ATPase and GTPase activities. The chain is Nucleotide-binding protein Mjls_2437 from Mycobacterium sp. (strain JLS).